We begin with the raw amino-acid sequence, 244 residues long: 6-carboxyhexanoate--CoA ligase (244 aa).

Belongs to the BioW family. As to quaternary structure, homodimer. The cofactor is Mg(2+).

It carries out the reaction heptanedioate + ATP + CoA = 6-carboxyhexanoyl-CoA + AMP + diphosphate. It functions in the pathway metabolic intermediate metabolism; pimeloyl-CoA biosynthesis; pimeloyl-CoA from pimelate: step 1/1. Functionally, catalyzes the transformation of pimelate into pimeloyl-CoA with concomitant hydrolysis of ATP to AMP. This chain is 6-carboxyhexanoate--CoA ligase, found in Methanococcus maripaludis (strain C6 / ATCC BAA-1332).